The sequence spans 511 residues: DNA nucleotidylexotransferase (511 aa).

The tract at residues methionine 1–threonine 26 is disordered. Positions proline 11–arginine 17 match the Nuclear localization signal motif. In terms of domain architecture, BRCT spans proline 27–glutamine 124. Serine 134 carries the post-translational modification Phosphoserine. The segment at serine 151–alanine 511 is mediates interaction with DNTTIP2. Positions valine 258–threonine 262 are involved in DNA binding. Residues glycine 333–lysine 338 and histidine 342–aspartate 345 contribute to the a 2'-deoxyribonucleoside 5'-triphosphate site. Mg(2+) is bound by residues aspartate 343, aspartate 345, and aspartate 435. Glycine 450–tryptophan 451 provides a ligand contact to a 2'-deoxyribonucleoside 5'-triphosphate.

Belongs to the DNA polymerase type-X family. In terms of assembly, interacts with PRP19 and DNTTIP1. Forms a ternary complex with DNTTIP2 and core histone. Released from this complex by PCNA. Interacts with TRERF1. Mg(2+) is required as a cofactor.

Its subcellular location is the nucleus. The enzyme catalyses DNA(n) + a 2'-deoxyribonucleoside 5'-triphosphate = DNA(n+1) + diphosphate. Template-independent DNA polymerase which catalyzes the random addition of deoxynucleoside 5'-triphosphate to the 3'-end of a DNA initiator. One of the in vivo functions of this enzyme is the addition of nucleotides at the junction (N region) of rearranged Ig heavy chain and T-cell receptor gene segments during the maturation of B- and T-cells. This is DNA nucleotidylexotransferase (DNTT) from Eulemur macaco (Black lemur).